The primary structure comprises 788 residues: Protein HHLF1 (788 aa).

Disordered regions lie at residues 1–82 (MAQR…NFWH), 366–385 (TGTA…ETEA), and 609–663 (IHKK…SRLP). The span at 16–25 (RGRGAGGPSG) shows a compositional bias: gly residues. Over residues 26–56 (VGSSPPSSCVPMGAPSTAGTGASAAATTTPG) the composition is skewed to low complexity. The tract at residues 74–248 (SGNNSNFWHG…HGAGEVVRLY (175 aa)) is RNA-binding. The span at 650 to 659 (LRRDDEDWKP) shows a compositional bias: basic and acidic residues. The segment at 671–788 (LDETFWVLGS…IATHYHYNAQ (118 aa)) is interaction with host EIF2AK2/PKR.

It belongs to the herpesviridae US22 family. In terms of assembly, interacts with host EIF2AK2/PKR; this interaction retains EIF2AK2 to the host nucleus and prevents its activation. Interaction (via N-terminus) with host BECN1; this interaction inhibits host autophagy. Interacts with the viral DNA polymerase accessory subunit UL44. Interacts with host HSPA5.

The protein localises to the virion. The protein resides in the host cytoplasm. Its subcellular location is the host nucleus. Inhibits the establishment of the antiviral state and the integrated stress response (ISR) in the infected cell. Prevents the phosphorylation of the host eukaryotic translation initiation factor eIF-2alpha/EIF2S1 and thus the shutoff of viral and cellular protein synthesis by directly interacting with EIF2AK2/PKR. Prevents stress granule formation in response to eIF-2alpha/EIF2S1 phosphorylation, thereby rescuing viral replication and protein synthesis. Also inhibits host autophagy by interacting with host Beclin-1/BECN1. This chain is Protein HHLF1 (TRS1), found in Homo sapiens (Human).